Here is a 355-residue protein sequence, read N- to C-terminus: Acidic fibroblast growth factor intracellular-binding protein B (355 aa).

As to quaternary structure, interacts with IER2.

It localises to the nucleus. It is found in the endomembrane system. In terms of biological role, mediates with IER2 FGF-signaling in Kupffer's vesicle ciliogenesis and in the establishment of laterality in the embryo. May be involved in mitogenic function of FGF1. In Danio rerio (Zebrafish), this protein is Acidic fibroblast growth factor intracellular-binding protein B.